A 209-amino-acid polypeptide reads, in one-letter code: MGQVFLLMPVLLVAGYLSLGAAMENQRLFNIAVNRVQHLHLLAQKMFNDFEGTLLPDERRQLNKIFLLDFCNSDSIVSPIDKHETQKSSVLKLLHISFRLIESWEYPSQTLTHTMSNNLNQNQMSEKLSNLKVGINLLIKGNQEDVPSLDDNDSQQLLPYGNYYQNLGDNDNVRRNYELLACFKKDMHKVETYLTVAKCRKSLEANCTL.

An N-terminal signal peptide occupies residues 1–22 (MGQVFLLMPVLLVAGYLSLGAA). His38 is a binding site for Zn(2+). An intrachain disulfide couples Cys71 to Cys182. Position 191 (Glu191) interacts with Zn(2+). A disulfide bridge links Cys199 with Cys207.

This sequence belongs to the somatotropin/prolactin family.

The protein resides in the secreted. Its function is as follows. Growth hormone plays an important role in growth control and is involved in the regulation of several anabolic processes. Implicated as an osmoregulatory substance important for seawater adaptation. The protein is Somatotropin (gh) of Esox lucius (Northern pike).